Here is a 185-residue protein sequence, read N- to C-terminus: UPF0669 protein C6orf120 homolog (185 aa).

The signal sequence occupies residues M1–C23. The N-linked (GlcNAc...) asparagine glycan is linked to N47.

This sequence belongs to the UPF0669 family.

Its subcellular location is the secreted. Functionally, may be involved in induction of apoptosis in CD4(+) T-cells, but not CD8(+) T-cells or hepatocytes. The chain is UPF0669 protein C6orf120 homolog from Mus musculus (Mouse).